The following is a 381-amino-acid chain: Class E basic helix-loop-helix protein 22 (381 aa).

Disordered regions lie at residues 30–94 (RLEA…GGGG), 135–154 (RGSV…DSDG), and 188–242 (HLHG…EQKA). Over residues 82-94 (GGGGGSAGSGGGG) the composition is skewed to gly residues. The segment covering 198–225 (GGLGGGGGGGSSSGSSGGGGGSGSGSGG) has biased composition (gly residues). The bHLH domain occupies 242–296 (ALRLNINARERRRMHDLNDALDELRAVIPYAHSPSVRKLSKIATLLLAKNYILMQ).

Interacts with PRDM8. Brain-specific, with the highest expression in the cerebellum.

The protein localises to the nucleus. Its function is as follows. Inhibits DNA binding of TCF3/E47 homodimers and TCF3 (E47)/NEUROD1 heterodimers and acts as a strong repressor of Neurod1 and Myod-responsive genes, probably by heterodimerization with class a basic helix-loop-helix factors. Despite the presence of an intact basic domain, does not bind to DNA. In the brain, may function as an area-specific transcription factor that regulates the postmitotic acquisition of area identities and elucidate the genetic hierarchy between progenitors and postmitotic neurons driving neocortical arealization. May be required for the survival of a specific population of inhibitory neurons in the superficial laminae of the spinal cord dorsal horn that may regulate pruritis. Seems to play a crucial role in the retinogenesis, in the specification of amacrine and bipolar subtypes. Forms with PRDM8 a transcriptional repressor complex controlling genes involved in neural development and neuronal differentiation. In Homo sapiens (Human), this protein is Class E basic helix-loop-helix protein 22 (BHLHE22).